The primary structure comprises 584 residues: 2-succinyl-5-enolpyruvyl-6-hydroxy-3-cyclohexene-1-carboxylate synthase (584 aa).

The protein belongs to the TPP enzyme family. MenD subfamily. As to quaternary structure, homodimer. Mg(2+) is required as a cofactor. It depends on Mn(2+) as a cofactor. Thiamine diphosphate serves as cofactor.

It carries out the reaction isochorismate + 2-oxoglutarate + H(+) = 5-enolpyruvoyl-6-hydroxy-2-succinyl-cyclohex-3-ene-1-carboxylate + CO2. The protein operates within quinol/quinone metabolism; 1,4-dihydroxy-2-naphthoate biosynthesis; 1,4-dihydroxy-2-naphthoate from chorismate: step 2/7. Its pathway is quinol/quinone metabolism; menaquinone biosynthesis. In terms of biological role, catalyzes the thiamine diphosphate-dependent decarboxylation of 2-oxoglutarate and the subsequent addition of the resulting succinic semialdehyde-thiamine pyrophosphate anion to isochorismate to yield 2-succinyl-5-enolpyruvyl-6-hydroxy-3-cyclohexene-1-carboxylate (SEPHCHC). This is 2-succinyl-5-enolpyruvyl-6-hydroxy-3-cyclohexene-1-carboxylate synthase from Bacillus anthracis.